A 182-amino-acid chain; its full sequence is ATP synthase subunit delta (182 aa).

It belongs to the ATPase delta chain family. F-type ATPases have 2 components, F(1) - the catalytic core - and F(0) - the membrane proton channel. F(1) has five subunits: alpha(3), beta(3), gamma(1), delta(1), epsilon(1). F(0) has three main subunits: a(1), b(2) and c(10-14). The alpha and beta chains form an alternating ring which encloses part of the gamma chain. F(1) is attached to F(0) by a central stalk formed by the gamma and epsilon chains, while a peripheral stalk is formed by the delta and b chains.

The protein localises to the cell membrane. Its activity is regulated as follows. Increases 2-fold following exposure to low pH. In terms of biological role, f(1)F(0) ATP synthase produces ATP from ADP in the presence of a proton or sodium gradient. F-type ATPases consist of two structural domains, F(1) containing the extramembraneous catalytic core and F(0) containing the membrane proton channel, linked together by a central stalk and a peripheral stalk. During catalysis, ATP synthesis in the catalytic domain of F(1) is coupled via a rotary mechanism of the central stalk subunits to proton translocation. Functionally, this protein is part of the stalk that links CF(0) to CF(1). It either transmits conformational changes from CF(0) to CF(1) or is implicated in proton conduction. In Lactobacillus acidophilus (strain ATCC 700396 / NCK56 / N2 / NCFM), this protein is ATP synthase subunit delta.